A 678-amino-acid chain; its full sequence is Glutamate--cysteine ligase (678 aa).

It belongs to the glutamate--cysteine ligase type 3 family.

The enzyme catalyses L-cysteine + L-glutamate + ATP = gamma-L-glutamyl-L-cysteine + ADP + phosphate + H(+). It participates in sulfur metabolism; glutathione biosynthesis; glutathione from L-cysteine and L-glutamate: step 1/2. With respect to regulation, feedback inhibition by glutathione. Functionally, catalyzes the ATP-dependent condensation of cysteine and glutamate to form the dipeptide gamma-glutamylcysteine (gamma-GC), the first and rate-limiting step in the production of glutathione (GSH). This chain is Glutamate--cysteine ligase (GSH1), found in Saccharomyces cerevisiae (strain ATCC 204508 / S288c) (Baker's yeast).